The chain runs to 337 residues: GTP 3',8-cyclase (337 aa).

The Radical SAM core domain occupies 17-242 (TFQREYYYLR…RQKDRTDGPA (226 aa)). Residue arginine 26 participates in GTP binding. [4Fe-4S] cluster contacts are provided by cysteine 33 and cysteine 37. Residue tyrosine 39 participates in S-adenosyl-L-methionine binding. [4Fe-4S] cluster is bound at residue cysteine 40. GTP is bound at residue arginine 76. Glycine 80 serves as a coordination point for S-adenosyl-L-methionine. Threonine 107 provides a ligand contact to GTP. An S-adenosyl-L-methionine-binding site is contributed by serine 131. Lysine 168 is a binding site for GTP. Position 202 (methionine 202) interacts with S-adenosyl-L-methionine. Residues cysteine 265 and cysteine 268 each contribute to the [4Fe-4S] cluster site. 270–272 (RLR) contacts GTP. Residue cysteine 282 participates in [4Fe-4S] cluster binding.

It belongs to the radical SAM superfamily. MoaA family. In terms of assembly, monomer and homodimer. The cofactor is [4Fe-4S] cluster.

It carries out the reaction GTP + AH2 + S-adenosyl-L-methionine = (8S)-3',8-cyclo-7,8-dihydroguanosine 5'-triphosphate + 5'-deoxyadenosine + L-methionine + A + H(+). It functions in the pathway cofactor biosynthesis; molybdopterin biosynthesis. Its function is as follows. Catalyzes the cyclization of GTP to (8S)-3',8-cyclo-7,8-dihydroguanosine 5'-triphosphate. The sequence is that of GTP 3',8-cyclase from Mannheimia succiniciproducens (strain KCTC 0769BP / MBEL55E).